A 463-amino-acid polypeptide reads, in one-letter code: MVAGEIIKGVAAEITNGSSSSVVQKYLDCANQVAPDPGNTTWVLLSTILVLGMMPALAFFEAGLLRSKNTLSIITQIMSGIVVLTVMWQAFGYSLTFGPDQKGIIGNLDHAFLINVSYDDCSPNAPNIPAAAYAFFMMMFANITPLLMTGAFAERVKFKAFIALTVAWEIIVFYPVAHWIWGGGWLHKYFGVLDFAGGIVIHTSAGVSALVIALYVGRRKDFEKYGGEFPPSNLPLATIGAALLWMGWFGFNAGSALAAGNIATSAVASTQIGGSFSAIVWIILSAAKGKPNTVSVINGVIAGLAGITPASGYINSQYSIGLGICLGLASYYSVVLLKHKLHIDDALDVSSVHGLTGIIGSLAIGFCAELSVNPNGANGAFYGNPKLIGTQLLGVVSVAVWAAAWTWVLLKIIDATIGVKIDESEEELGLDLVEHGEFAYHNISLQGNENHYSSVINSHDFFK.

Residues 1–39 (MVAGEIIKGVAAEITNGSSSSVVQKYLDCANQVAPDPGN) are Extracellular-facing. A helical membrane pass occupies residues 40 to 60 (TTWVLLSTILVLGMMPALAFF). Residues 61–76 (EAGLLRSKNTLSIITQ) lie on the Cytoplasmic side of the membrane. A helical membrane pass occupies residues 77-97 (IMSGIVVLTVMWQAFGYSLTF). Topologically, residues 98–127 (GPDQKGIIGNLDHAFLINVSYDDCSPNAPN) are extracellular. A helical membrane pass occupies residues 128-148 (IPAAAYAFFMMMFANITPLLM). Residues 149–160 (TGAFAERVKFKA) lie on the Cytoplasmic side of the membrane. Residues 161–181 (FIALTVAWEIIVFYPVAHWIW) traverse the membrane as a helical segment. Residues 182–194 (GGGWLHKYFGVLD) are Extracellular-facing. Residues 195–215 (FAGGIVIHTSAGVSALVIALY) traverse the membrane as a helical segment. Residues 216-233 (VGRRKDFEKYGGEFPPSN) are Cytoplasmic-facing. The chain crosses the membrane as a helical span at residues 234–254 (LPLATIGAALLWMGWFGFNAG). Residues 255–265 (SALAAGNIATS) lie on the Extracellular side of the membrane. The chain crosses the membrane as a helical span at residues 266–286 (AVASTQIGGSFSAIVWIILSA). Residues 287–293 (AKGKPNT) are Cytoplasmic-facing. A helical transmembrane segment spans residues 294–314 (VSVINGVIAGLAGITPASGYI). Residues 315–316 (NS) lie on the Extracellular side of the membrane. The helical transmembrane segment at 317–337 (QYSIGLGICLGLASYYSVVLL) threads the bilayer. The Cytoplasmic segment spans residues 338-351 (KHKLHIDDALDVSS). A helical transmembrane segment spans residues 352-372 (VHGLTGIIGSLAIGFCAELSV). Residues 373–392 (NPNGANGAFYGNPKLIGTQL) are Extracellular-facing. A helical transmembrane segment spans residues 393–413 (LGVVSVAVWAAAWTWVLLKII). Topologically, residues 414–463 (DATIGVKIDESEEELGLDLVEHGEFAYHNISLQGNENHYSSVINSHDFFK) are cytoplasmic.

This sequence belongs to the ammonia transporter channel (TC 1.A.11.2) family.

It localises to the cell membrane. The protein localises to the endosome membrane. It is found in the lysosome membrane. Its subcellular location is the cytoplasmic vesicle. The protein resides in the phagosome membrane. Its function is as follows. Ammonium transporter that mediates the excretion of ammonium. Controls ammonium homeostasis during growth and development. Ammonium has been shown to function as a morphogen at multiple steps during the development. The protein is Ammonium transporter 1 (amtA) of Dictyostelium discoideum (Social amoeba).